Consider the following 345-residue polypeptide: MHFLDQAKIFIRSGAGGPGAVSFRREKFIEYGGPDGGHGGKGGDIIFEAVPGLNTLIDFRYTQHFKAQRGHGGAGSNRTGAGGEDLLIKVPVGTQILSEDREQVLADFTVPGQRQVFLRGGDGGRGNASYKTSTNRAPRQHGTGWPAEEMWVWLRLKLLADCGLVGLPNAGKSTFINAVSNAKAKVGAYPFTTIRPQLGVATHKGREFVVADIPGLIEGAAEGAGIGDRFLGHIERCRVLLHLVDASGDDPVGAYEIVRGELDAYGAGLADKPQVLALNKIDAVDAKTLDKLAKKLAKLGGGEVMRLSGASGEGLPAVLDKIIEILGPAPETTAANENDEPWSPI.

The 159-residue stretch at 1-159 (MHFLDQAKIF…MWVWLRLKLL (159 aa)) folds into the Obg domain. The disordered stretch occupies residues 121–142 (GDGGRGNASYKTSTNRAPRQHG). The OBG-type G domain maps to 160–327 (ADCGLVGLPN…VLDKIIEILG (168 aa)). GTP-binding positions include 166–173 (GLPNAGKS), 191–195 (FTTIR), 212–215 (DIPG), 279–282 (NKID), and 308–310 (SGA). Residues Ser173 and Thr193 each coordinate Mg(2+).

The protein belongs to the TRAFAC class OBG-HflX-like GTPase superfamily. OBG GTPase family. As to quaternary structure, monomer. The cofactor is Mg(2+).

Its subcellular location is the cytoplasm. In terms of biological role, an essential GTPase which binds GTP, GDP and possibly (p)ppGpp with moderate affinity, with high nucleotide exchange rates and a fairly low GTP hydrolysis rate. Plays a role in control of the cell cycle, stress response, ribosome biogenesis and in those bacteria that undergo differentiation, in morphogenesis control. This is GTPase Obg from Rhizorhabdus wittichii (strain DSM 6014 / CCUG 31198 / JCM 15750 / NBRC 105917 / EY 4224 / RW1) (Sphingomonas wittichii).